Reading from the N-terminus, the 197-residue chain is Phosphoheptose isomerase (197 aa).

One can recognise an SIS domain in the interval 34 to 196 (MVHCLLGGNK…DRTLFPQDEQ (163 aa)). Substrate is bound at residue 49 to 51 (NGG). Zn(2+) contacts are provided by H58 and E62. Residues E62, 91-92 (ND), 117-119 (STS), S122, and Q172 each bind substrate. 2 residues coordinate Zn(2+): Q172 and H180.

This sequence belongs to the SIS family. GmhA subfamily. As to quaternary structure, homotetramer. Zn(2+) serves as cofactor.

Its subcellular location is the cytoplasm. It catalyses the reaction 2 D-sedoheptulose 7-phosphate = D-glycero-alpha-D-manno-heptose 7-phosphate + D-glycero-beta-D-manno-heptose 7-phosphate. It participates in carbohydrate biosynthesis; D-glycero-D-manno-heptose 7-phosphate biosynthesis; D-glycero-alpha-D-manno-heptose 7-phosphate and D-glycero-beta-D-manno-heptose 7-phosphate from sedoheptulose 7-phosphate: step 1/1. Its function is as follows. Catalyzes the isomerization of sedoheptulose 7-phosphate in D-glycero-D-manno-heptose 7-phosphate. This is Phosphoheptose isomerase from Shewanella sediminis (strain HAW-EB3).